Here is a 378-residue protein sequence, read N- to C-terminus: MLAPFACQPGESRGRQKPESMSTFRSPFQRDRDRIIHSSAFRRLKHKTQVFVEHEGDYYRTRLTHSIEVAQVARTISGVLGLNTDLAECIALAHDLGHTPFGHTGEDALARLMEPYGGFDHNAQAMRIVTRLERHYAEFDGLNLTWESLEGIAKHNGPVEGPLPYALAEANAQWDLELHTYASAEAQVAAIADDVAYSHHDLHDGLRSGLFTEADLMELPVTAPAFDEVDALYPGLEPMRRRHEALRRVFGRMVEDVIAVAQGRLEAAQPKSVEEIRQMGATVIRFSKPLYQELKVIRSFLFHRMYRAPSVMKERAKVTAVVNDLFPLFMARPELLPQEWRRDVEAAADETTLARIVADYVAGMTDRFALQEHARLCG.

Residues 1-28 (MLAPFACQPGESRGRQKPESMSTFRSPF) form a disordered region. The HD domain occupies 62-198 (RLTHSIEVAQ…AAIADDVAYS (137 aa)).

This sequence belongs to the dGTPase family. Type 2 subfamily.

The sequence is that of Deoxyguanosinetriphosphate triphosphohydrolase-like protein from Cereibacter sphaeroides (strain ATCC 17029 / ATH 2.4.9) (Rhodobacter sphaeroides).